Here is a 339-residue protein sequence, read N- to C-terminus: Phenylalanine--tRNA ligase alpha subunit (339 aa).

Position 254 (Glu-254) interacts with Mg(2+).

Belongs to the class-II aminoacyl-tRNA synthetase family. Phe-tRNA synthetase alpha subunit type 1 subfamily. In terms of assembly, tetramer of two alpha and two beta subunits. Requires Mg(2+) as cofactor.

The protein localises to the cytoplasm. It carries out the reaction tRNA(Phe) + L-phenylalanine + ATP = L-phenylalanyl-tRNA(Phe) + AMP + diphosphate + H(+). This is Phenylalanine--tRNA ligase alpha subunit from Desulforudis audaxviator (strain MP104C).